Consider the following 240-residue polypeptide: MGRRIQGQRRGRGGPTFRAPSHRYKAELSHKKLEDVDTITGEIVGIEHDPARSAPLAEIEFEDDDRRLVLAPEGVRVGDTIQVGVSAEIKPGNTLPLAEIPEGVPVCNVESNRGDGGKFARASGVSATLLTHDRDVAVVQLPSGEVKRLDPQCRATIGVVAGGGRTEKPFVKAGNKYHKMKARGTKYPRVRGVAMNAVDHPFGGGGRQHPGQPKSVSRDAPPGRKVGDIASKRTGRGSNK.

Residues 1–12 show a composition bias toward basic residues; that stretch reads MGRRIQGQRRGR. 2 disordered regions span residues 1-21 and 198-240; these read MGRR…RAPS and VDHP…GSNK. Residues 221 to 231 are compositionally biased toward basic and acidic residues; that stretch reads PPGRKVGDIAS.

Belongs to the universal ribosomal protein uL2 family. Part of the 50S ribosomal subunit. Forms a bridge to the 30S subunit in the 70S ribosome.

In terms of biological role, one of the primary rRNA binding proteins. Required for association of the 30S and 50S subunits to form the 70S ribosome, for tRNA binding and peptide bond formation. It has been suggested to have peptidyltransferase activity; this is somewhat controversial. Makes several contacts with the 16S rRNA in the 70S ribosome. The sequence is that of Large ribosomal subunit protein uL2 from Halorubrum lacusprofundi (strain ATCC 49239 / DSM 5036 / JCM 8891 / ACAM 34).